The following is a 92-amino-acid chain: uncharacterized protein (92 aa).

The tract at residues 25 to 53 (AGRGVRREARDTPCRGTAEGLATSQPEDG) is disordered.

This is an uncharacterized protein from Treponema pallidum (strain Nichols).